The following is a 107-amino-acid chain: Iron-sulfur cluster assembly protein CyaY (107 aa).

It belongs to the frataxin family.

Its function is as follows. Involved in iron-sulfur (Fe-S) cluster assembly. May act as a regulator of Fe-S biogenesis. The sequence is that of Iron-sulfur cluster assembly protein CyaY from Neisseria gonorrhoeae (strain ATCC 700825 / FA 1090).